Reading from the N-terminus, the 118-residue chain is Large ribosomal subunit protein uL22c (118 aa).

This sequence belongs to the universal ribosomal protein uL22 family. As to quaternary structure, part of the 50S ribosomal subunit.

It is found in the plastid. The protein resides in the chloroplast. Functionally, this protein binds specifically to 23S rRNA. Its function is as follows. The globular domain of the protein is located near the polypeptide exit tunnel on the outside of the subunit, while an extended beta-hairpin is found that lines the wall of the exit tunnel in the center of the 70S ribosome. The protein is Large ribosomal subunit protein uL22c (rpl22) of Rhodomonas salina (Cryptomonas salina).